Here is a 171-residue protein sequence, read N- to C-terminus: Ribosome maturation factor RimM (171 aa).

The PRC barrel domain occupies 96 to 170; the sequence is AEGEYYYHEI…LVTIHVMEGL (75 aa).

It belongs to the RimM family. In terms of assembly, binds ribosomal protein uS19.

It localises to the cytoplasm. Functionally, an accessory protein needed during the final step in the assembly of 30S ribosomal subunit, possibly for assembly of the head region. Essential for efficient processing of 16S rRNA. May be needed both before and after RbfA during the maturation of 16S rRNA. It has affinity for free ribosomal 30S subunits but not for 70S ribosomes. The chain is Ribosome maturation factor RimM from Bacillus cereus (strain G9842).